The primary structure comprises 98 residues: NADH-ubiquinone oxidoreductase chain 4L (98 aa).

The next 3 membrane-spanning stretches (helical) occupy residues 1-21 (MSMV…GLLI), 30-50 (LLCL…TILT), and 61-81 (IILL…LVMI).

Belongs to the complex I subunit 4L family. As to quaternary structure, core subunit of respiratory chain NADH dehydrogenase (Complex I) which is composed of 45 different subunits.

It is found in the mitochondrion inner membrane. It carries out the reaction a ubiquinone + NADH + 5 H(+)(in) = a ubiquinol + NAD(+) + 4 H(+)(out). Core subunit of the mitochondrial membrane respiratory chain NADH dehydrogenase (Complex I) which catalyzes electron transfer from NADH through the respiratory chain, using ubiquinone as an electron acceptor. Part of the enzyme membrane arm which is embedded in the lipid bilayer and involved in proton translocation. The sequence is that of NADH-ubiquinone oxidoreductase chain 4L (MT-ND4L) from Gulo gulo (Wolverine).